The following is a 194-amino-acid chain: Peptidyl-tRNA hydrolase (194 aa).

Y16 is a binding site for tRNA. The Proton acceptor role is filled by H21. Residues F67, N69, and N115 each contribute to the tRNA site.

Belongs to the PTH family. Monomer.

It is found in the cytoplasm. It carries out the reaction an N-acyl-L-alpha-aminoacyl-tRNA + H2O = an N-acyl-L-amino acid + a tRNA + H(+). Its function is as follows. Hydrolyzes ribosome-free peptidyl-tRNAs (with 1 or more amino acids incorporated), which drop off the ribosome during protein synthesis, or as a result of ribosome stalling. In terms of biological role, catalyzes the release of premature peptidyl moieties from peptidyl-tRNA molecules trapped in stalled 50S ribosomal subunits, and thus maintains levels of free tRNAs and 50S ribosomes. The protein is Peptidyl-tRNA hydrolase of Salmonella dublin (strain CT_02021853).